The chain runs to 381 residues: N-acetylglucosamine-6-phosphate deacetylase (381 aa).

E129 serves as a coordination point for a divalent metal cation. 140 to 141 (VH) contacts substrate. Positions 193 and 214 each coordinate a divalent metal cation. Substrate-binding positions include 217–218 (NA), R226, and 246–249 (DGVH). Catalysis depends on D271, which acts as the Proton donor/acceptor. A substrate-binding site is contributed by 306–308 (IAG).

This sequence belongs to the metallo-dependent hydrolases superfamily. NagA family. As to quaternary structure, homotetramer. A divalent metal cation serves as cofactor.

The enzyme catalyses N-acetyl-D-glucosamine 6-phosphate + H2O = D-glucosamine 6-phosphate + acetate. Its pathway is amino-sugar metabolism; N-acetylneuraminate degradation; D-fructose 6-phosphate from N-acetylneuraminate: step 4/5. Its function is as follows. Involved in the first committed step in the biosynthesis of amino-sugar-nucleotides. Catalyzes the hydrolysis of the N-acetyl group of N-acetylglucosamine-6-phosphate (GlcNAc-6-P) to yield glucosamine 6-phosphate and acetate. The chain is N-acetylglucosamine-6-phosphate deacetylase (nagA) from Haemophilus influenzae (strain ATCC 51907 / DSM 11121 / KW20 / Rd).